The following is a 692-amino-acid chain: DNA ligase (692 aa).

Polar residues predominate over residues 1-14 (MQPDLFSTASQADA). Residues 1 to 27 (MQPDLFSTASQADANATPEEPDASNPA) are disordered. Residues 54–58 (DAEYD), 103–104 (SL), and Glu134 contribute to the NAD(+) site. The active-site N6-AMP-lysine intermediate is Lys136. Residues Arg157, Glu194, Lys311, and Lys335 each coordinate NAD(+). 4 residues coordinate Zn(2+): Cys429, Cys432, Cys447, and Cys454. The region spanning 612–692 (NKPKPFAGKT…ALLQLLDTHE (81 aa)) is the BRCT domain.

It belongs to the NAD-dependent DNA ligase family. LigA subfamily. Requires Mg(2+) as cofactor. It depends on Mn(2+) as a cofactor.

The enzyme catalyses NAD(+) + (deoxyribonucleotide)n-3'-hydroxyl + 5'-phospho-(deoxyribonucleotide)m = (deoxyribonucleotide)n+m + AMP + beta-nicotinamide D-nucleotide.. DNA ligase that catalyzes the formation of phosphodiester linkages between 5'-phosphoryl and 3'-hydroxyl groups in double-stranded DNA using NAD as a coenzyme and as the energy source for the reaction. It is essential for DNA replication and repair of damaged DNA. This chain is DNA ligase, found in Janthinobacterium sp. (strain Marseille) (Minibacterium massiliensis).